We begin with the raw amino-acid sequence, 142 residues long: Nucleoside diphosphate kinase (142 aa).

ATP is bound by residues Lys11, Phe59, Arg87, Thr93, Arg104, and Asn114. His117 (pros-phosphohistidine intermediate) is an active-site residue.

It belongs to the NDK family. In terms of assembly, homotetramer. It depends on Mg(2+) as a cofactor.

Its subcellular location is the cytoplasm. The enzyme catalyses a 2'-deoxyribonucleoside 5'-diphosphate + ATP = a 2'-deoxyribonucleoside 5'-triphosphate + ADP. It carries out the reaction a ribonucleoside 5'-diphosphate + ATP = a ribonucleoside 5'-triphosphate + ADP. Its function is as follows. Major role in the synthesis of nucleoside triphosphates other than ATP. The ATP gamma phosphate is transferred to the NDP beta phosphate via a ping-pong mechanism, using a phosphorylated active-site intermediate. In Yersinia pestis bv. Antiqua (strain Antiqua), this protein is Nucleoside diphosphate kinase.